Reading from the N-terminus, the 545-residue chain is MTTNYIFVTGGVVSSLGKGIAAASLAAILEARGLNVTIMKLDPYINVDPGTMSPIQHGEVFVTEDGAETDLDLGHYERFIRTKMSRRNNFTTGRIYSDVLRKERRGDYLGATVQVIPHITNAIKERVLEGGEGHDVVLVEIGGTVGDIESLPFLEAIRQMAVEIGREHTLFMHLTLVPYMAASGEVKTKPTQHSVKELLSIGIQPDILICRSDRAVPANERAKIALFCNVPEKAVISLKDVDSIYKIPGLLKSQGLDDYICKRFSLDCPEANLSEWEQVIFEEANPVSEVTIGMVGKYIELPDAYKSVIEALKHGGLKNRVSVNIKLIDSQDVETRGVEILKGLDAILVPGGFGYRGVEGMITTARFARENNIPYLGICLGMQVALIDYARHVANMENANSTEFVPDCKYPVVALITEWRDENGNVEVRSEKSDLGGTMRLGAQQCQLVDDSLVRQLYDAPTIVERHRHRYEVNNMLLKQIEDAGLRVAGRSGDDQLVEIIEVPNHPWFVACQFHPEFTSTPRDGHPLFAGFVKAASEFQKRQAK.

Residues 1-266 (MTTNYIFVTG…DDYICKRFSL (266 aa)) are amidoligase domain. Residue serine 14 coordinates CTP. Serine 14 provides a ligand contact to UTP. ATP contacts are provided by residues 15–20 (SLGKGI) and aspartate 72. Mg(2+) contacts are provided by aspartate 72 and glutamate 140. Residues 147-149 (DIE), 187-192 (KTKPTQ), and lysine 223 each bind CTP. UTP is bound by residues 187–192 (KTKPTQ) and lysine 223. An ATP-binding site is contributed by 239-241 (KDV). The Glutamine amidotransferase type-1 domain maps to 291 to 542 (TIGMVGKYIE…VKAASEFQKR (252 aa)). Glycine 352 is a binding site for L-glutamine. Cysteine 379 serves as the catalytic Nucleophile; for glutamine hydrolysis. L-glutamine contacts are provided by residues 380–383 (LGMQ), glutamate 403, and arginine 470. Catalysis depends on residues histidine 515 and glutamate 517.

This sequence belongs to the CTP synthase family. As to quaternary structure, homotetramer.

It carries out the reaction UTP + L-glutamine + ATP + H2O = CTP + L-glutamate + ADP + phosphate + 2 H(+). The enzyme catalyses L-glutamine + H2O = L-glutamate + NH4(+). The catalysed reaction is UTP + NH4(+) + ATP = CTP + ADP + phosphate + 2 H(+). The protein operates within pyrimidine metabolism; CTP biosynthesis via de novo pathway; CTP from UDP: step 2/2. With respect to regulation, allosterically activated by GTP, when glutamine is the substrate; GTP has no effect on the reaction when ammonia is the substrate. The allosteric effector GTP functions by stabilizing the protein conformation that binds the tetrahedral intermediate(s) formed during glutamine hydrolysis. Inhibited by the product CTP, via allosteric rather than competitive inhibition. Functionally, catalyzes the ATP-dependent amination of UTP to CTP with either L-glutamine or ammonia as the source of nitrogen. Regulates intracellular CTP levels through interactions with the four ribonucleotide triphosphates. The polypeptide is CTP synthase (Escherichia coli O127:H6 (strain E2348/69 / EPEC)).